The following is a 143-amino-acid chain: MRLNSIAPAPGSRPSAKRVGRGIGSGLGKTAGRGHKGQKARAGGYHKVGFEGGQMPLQRRLPKVGFNSRKSLRVAEVRLHELAGLEGTIDLAALIKASVVPAQTLRAKVIASGKLEKAVTLKGVAVTKGAREAIEAAGGKIEE.

The interval 1–51 is disordered; sequence MRLNSIAPAPGSRPSAKRVGRGIGSGLGKTAGRGHKGQKARAGGYHKVGFE. The segment covering 21-31 has biased composition (gly residues); it reads RGIGSGLGKTA.

It belongs to the universal ribosomal protein uL15 family. As to quaternary structure, part of the 50S ribosomal subunit.

In terms of biological role, binds to the 23S rRNA. The chain is Large ribosomal subunit protein uL15 from Thioalkalivibrio sulfidiphilus (strain HL-EbGR7).